The following is a 262-amino-acid chain: tRNA (guanine-N(1)-)-methyltransferase (262 aa).

S-adenosyl-L-methionine contacts are provided by residues glycine 112 and 132–137 (IGDYIL).

This sequence belongs to the RNA methyltransferase TrmD family. Homodimer.

It is found in the cytoplasm. It carries out the reaction guanosine(37) in tRNA + S-adenosyl-L-methionine = N(1)-methylguanosine(37) in tRNA + S-adenosyl-L-homocysteine + H(+). In terms of biological role, specifically methylates guanosine-37 in various tRNAs. The chain is tRNA (guanine-N(1)-)-methyltransferase from Desulfatibacillum aliphaticivorans.